Consider the following 143-residue polypeptide: MFLGTHHPKLDDKGRLTLPAKFREALAGGLMVTKGQDHCLYVFPRAEFEQMARKVAEAPFTNESVRAYQRYLFAGTDEQQPDGQGRISIAAELRRYAGLTKECVVIGAINRLEIWNAERWQTYLDEHEEDYAQAREEVLPGVF.

SpoVT-AbrB domains are found at residues 5–47 (THHP…PRAE) and 76–119 (TDEQ…NAER).

It belongs to the MraZ family. Forms oligomers.

Its subcellular location is the cytoplasm. It localises to the nucleoid. This chain is Transcriptional regulator MraZ, found in Saccharopolyspora erythraea (strain ATCC 11635 / DSM 40517 / JCM 4748 / NBRC 13426 / NCIMB 8594 / NRRL 2338).